Consider the following 273-residue polypeptide: 4-hydroxy-tetrahydrodipicolinate reductase (273 aa).

NAD(+) contacts are provided by residues Gly12–Met17 and Glu38. An NADP(+)-binding site is contributed by Arg39. Residues Gly102–Thr104 and Ala126–Phe129 contribute to the NAD(+) site. His159 functions as the Proton donor/acceptor in the catalytic mechanism. His160 provides a ligand contact to (S)-2,3,4,5-tetrahydrodipicolinate. The active-site Proton donor is Lys163. Position 169–170 (Gly169–Thr170) interacts with (S)-2,3,4,5-tetrahydrodipicolinate.

The protein belongs to the DapB family. As to quaternary structure, homotetramer.

The protein localises to the cytoplasm. It catalyses the reaction (S)-2,3,4,5-tetrahydrodipicolinate + NAD(+) + H2O = (2S,4S)-4-hydroxy-2,3,4,5-tetrahydrodipicolinate + NADH + H(+). The catalysed reaction is (S)-2,3,4,5-tetrahydrodipicolinate + NADP(+) + H2O = (2S,4S)-4-hydroxy-2,3,4,5-tetrahydrodipicolinate + NADPH + H(+). It participates in amino-acid biosynthesis; L-lysine biosynthesis via DAP pathway; (S)-tetrahydrodipicolinate from L-aspartate: step 4/4. Functionally, catalyzes the conversion of 4-hydroxy-tetrahydrodipicolinate (HTPA) to tetrahydrodipicolinate. The chain is 4-hydroxy-tetrahydrodipicolinate reductase from Yersinia pseudotuberculosis serotype O:1b (strain IP 31758).